The chain runs to 122 residues: Large ribosomal subunit protein uL18 (122 aa).

Residues 1-19 (MSKLSRKQQTQKRHKRLRR) show a composition bias toward basic residues. Positions 1-27 (MSKLSRKQQTQKRHKRLRRNLSGTESR) are disordered.

It belongs to the universal ribosomal protein uL18 family. Part of the 50S ribosomal subunit; part of the 5S rRNA/L5/L18/L25 subcomplex. Contacts the 5S and 23S rRNAs.

Functionally, this is one of the proteins that bind and probably mediate the attachment of the 5S RNA into the large ribosomal subunit, where it forms part of the central protuberance. The protein is Large ribosomal subunit protein uL18 of Prochlorococcus marinus (strain NATL1A).